Consider the following 121-residue polypeptide: Large ribosomal subunit protein uL18 (121 aa).

It belongs to the universal ribosomal protein uL18 family. As to quaternary structure, part of the 50S ribosomal subunit; part of the 5S rRNA/L5/L18/L25 subcomplex. Contacts the 5S and 23S rRNAs.

This is one of the proteins that bind and probably mediate the attachment of the 5S RNA into the large ribosomal subunit, where it forms part of the central protuberance. In Paracidovorax citrulli (strain AAC00-1) (Acidovorax citrulli), this protein is Large ribosomal subunit protein uL18.